A 235-amino-acid polypeptide reads, in one-letter code: Phosphoribosylaminoimidazole-succinocarboxamide synthase (235 aa).

This sequence belongs to the SAICAR synthetase family.

It catalyses the reaction 5-amino-1-(5-phospho-D-ribosyl)imidazole-4-carboxylate + L-aspartate + ATP = (2S)-2-[5-amino-1-(5-phospho-beta-D-ribosyl)imidazole-4-carboxamido]succinate + ADP + phosphate + 2 H(+). The protein operates within purine metabolism; IMP biosynthesis via de novo pathway; 5-amino-1-(5-phospho-D-ribosyl)imidazole-4-carboxamide from 5-amino-1-(5-phospho-D-ribosyl)imidazole-4-carboxylate: step 1/2. This Nautilia profundicola (strain ATCC BAA-1463 / DSM 18972 / AmH) protein is Phosphoribosylaminoimidazole-succinocarboxamide synthase.